Here is a 134-residue protein sequence, read N- to C-terminus: MRSSSPSTGHSTQVPIKVQHRIAKKTTRRRRVDLPCGCSYFVALGCHNHGFTHRGTTHCSSIREWRVYLDGQKSPVFQDNQTPRETISEEPRHNHNTSPIQLQPEESVGDTQMFSNLPNLDSFTSSDLAFLKSI.

The Nuclear localization signal motif lies at 17–31 (KVQHRIAKKTTRRRR). A zinc finger spans residues 36–53 (CGCSYFVALGCHNHGFTH). The segment at 73-103 (KSPVFQDNQTPRETISEEPRHNHNTSPIQLQ) is disordered. The segment covering 75-85 (PVFQDNQTPRE) has biased composition (polar residues). Positions 119 to 134 (NLDSFTSSDLAFLKSI) are transactivation.

It belongs to the geminiviridae transcriptional activator protein family. In terms of assembly, monomer. Homodimer. Homooligomer. Self-interaction correlates with nuclear localization and efficient activation of transcription. Monomers suppress local silencing by interacting with and inactivating host adenosine kinase 2 (ADK2) in the cytoplasm. Interacts with and inhibits host SNF1 kinase. Binds to ssDNA. May interact with host RPS27A. Phosphorylated.

Its subcellular location is the host nucleus. The protein resides in the host cytoplasm. Multifunctional protein that modulates host antiviral defenses and promotes host attractiveness to insect vectors. Acts as a suppressor of RNA-mediated gene silencing, also known as post-transcriptional gene silencing (PTGS), a mechanism of plant viral defense that limits the accumulation of viral RNAs. TrAP suppresses the host RNA silencing by inhibiting adenosine kinase 2 (ADK2), a kinase involved in a general methylation pathway. Also suppresses the host basal defense by interacting with and inhibiting SNF1 kinase, a key regulator of cell metabolism implicated in innate antiviral defense. Its function is as follows. Inhibits signal transduction by the phytohormone jasmonate, making the infected plant more attractive to aphids, which are the second host to play a role as a dissemination vector. Acts by binding to ubiquitin precursor RPS27A, thereby preventing ubiquitin degradation of JAZ. This is Transcriptional activator protein from Tomato yellow leaf curl China virus (TYLCCNV).